The chain runs to 259 residues: Tumor necrosis factor receptor superfamily member 10C (259 aa).

The first 25 residues, 1 to 25 (MARIPKTLKFVVVIVAVLLPVLAYS), serve as a signal peptide directing secretion. TNFR-Cys repeat units lie at residues 29–66 (ARQEEVPQQTVAPQQQRHSFKGEECPAGSHRSEHTGAC), 69–109 (CTEG…DTVC), and 110–149 (QCKEGTFRNENSPEMCRKCSRCPSGEVQVSNCTSWDDIQC). Over residues 30–45 (RQEEVPQQTVAPQQQR) the composition is skewed to polar residues. The interval 30 to 56 (RQEEVPQQTVAPQQQRHSFKGEECPAG) is disordered. Disulfide bonds link Cys-53-Cys-66, Cys-69-Cys-85, Cys-88-Cys-101, Cys-91-Cys-109, Cys-111-Cys-125, Cys-128-Cys-141, and Cys-131-Cys-149. Asn-77 carries N-linked (GlcNAc...) (high mannose) asparagine glycosylation. 2 N-linked (GlcNAc...) (high mannose) asparagine glycosylation sites follow: Asn-140 and Asn-156. The tract at residues 160–224 (ETPAAEETMN…TSPGTPAPAA (65 aa)) is disordered. TAPE repeat units follow at residues 162 to 176 (PAAEETMNTSPGTPA), 177 to 191 (PAAEETMNTSPGTPA), 192 to 206 (PAAEETMTTSPGTPA), 207 to 221 (PAAEETMTTSPGTPA), and 222 to 236 (PAAEETMITSPGTPA). Over residues 185 to 217 (TSPGTPAPAAEETMTTSPGTPAPAAEETMTTSP) the composition is skewed to low complexity. Ala-236 carries the GPI-anchor amidated alanine lipid modification. The propeptide at 237-259 (SSHYLSCTIVGIIVLIVLLIVFV) is removed in mature form.

N-glycosylated and O-glycosylated. In terms of tissue distribution, higher expression in normal tissues than in tumor cell lines. Highly expressed in peripheral blood lymphocytes, spleen, skeletal muscle, placenta, lung and heart.

The protein resides in the cell membrane. In terms of biological role, receptor for the cytotoxic ligand TRAIL. Lacks a cytoplasmic death domain and hence is not capable of inducing apoptosis. May protect cells against TRAIL mediated apoptosis by competing with TRAIL-R1 and R2 for binding to the ligand. This is Tumor necrosis factor receptor superfamily member 10C (TNFRSF10C) from Homo sapiens (Human).